Reading from the N-terminus, the 377-residue chain is Geranylgeranyl transferase type-1 subunit beta (377 aa).

4 PFTB repeats span residues 144 to 186 (KEAC…YMLN), 193 to 234 (MKKA…CLMG), 245 to 284 (LNRIKRWCIMRQQNGYHGRPNKPVDTCYSFWVGATLKLLK), and 291 to 333 (FEKN…SLME). Residues 219-221 (HGG) and 263-266 (RPNK) contribute to the geranylgeranyl diphosphate site. Positions 269 and 271 each coordinate Zn(2+). 272–275 (YSFW) provides a ligand contact to geranylgeranyl diphosphate. His-321 serves as a coordination point for Zn(2+).

This sequence belongs to the protein prenyltransferase subunit beta family. As to quaternary structure, heterodimer of FNTA and PGGT1B. PGGT1B mediates interaction with substrate peptides. It depends on Zn(2+) as a cofactor. Mg(2+) is required as a cofactor.

The enzyme catalyses geranylgeranyl diphosphate + L-cysteinyl-[protein] = S-geranylgeranyl-L-cysteinyl-[protein] + diphosphate. Its function is as follows. Catalyzes the transfer of a geranyl-geranyl moiety from geranyl-geranyl pyrophosphate to a cysteine at the fourth position from the C-terminus of proteins having the C-terminal sequence Cys-aliphatic-aliphatic-X. Known substrates include RAC1, RAC2, RAP1A and RAP1B. The protein is Geranylgeranyl transferase type-1 subunit beta (PGGT1B) of Homo sapiens (Human).